The primary structure comprises 291 residues: Sesquiterpene cyclase astC (291 aa).

The protein belongs to the HAD-like hydrolase superfamily.

It catalyses the reaction (2E,6E)-farnesyl diphosphate = (S,S)-drim-8-en-11-yl diphosphate. It functions in the pathway secondary metabolite biosynthesis; terpenoid biosynthesis. In terms of biological role, sesquiterpene cyclase; part of the gene cluster that mediates the biosynthesis of astellolides, drimane-type sesquiterpene esters that show antimicrobial, anti-inflammatory, and anti-tumor activities. The first step in astellolide biosynthesis is performed by the sesquiterpene cyclase astC that catalyzes the formation of drimanyl pyrophosphate from farnesyl pyrophosphate. Drimanyl pyrophosphate is then dephosphorylated by the sesquiterpene phosphatase astI to produce drimanyl monophosphate which is further dephosphorylated to drim-8-ene-11-ol by atsK. Drim-8-ene-11-ol is converted to confertifolin, probably by the cytochrome P450 monooxygenase astD and/or the dehydrogenase astE. The cytochrome P450 monooxygenases astB, astF and astJ then hydroxylate confertifolin at C6, C14, or C15 to form trihydroxy confertifolin. The nonribosomal peptide synthetase astA catalyzes ester bond formation between trihydroxy contifolin and benzoic acid (BA) or 4-hydroxy benzoic acid (4HBA), leading to the formation of dideacetyl astellolides A and B, respectively. Finally, the O-acetyltransferase astG converts dideacetyl astellolides A and B into deacetyl astellolides A and B. The chain is Sesquiterpene cyclase astC from Aspergillus oryzae (strain ATCC 42149 / RIB 40) (Yellow koji mold).